The sequence spans 266 residues: Orcokinin peptides type B (266 aa).

The signal sequence occupies residues 1 to 20 (MTAQMFTIALLLSLSAIAAA). 3 consecutive propeptides follow at residues 21–46 (GTIK…GAPV), 240–246 (DYDVFPD), and 264–266 (NVE).

The protein belongs to the orcokinin family.

It is found in the secreted. Its function is as follows. Myotropic peptides that enhance both the frequency and amplitude of spontaneous hindgut contractions. The sequence is that of Orcokinin peptides type B from Procambarus clarkii (Red swamp crayfish).